Reading from the N-terminus, the 461-residue chain is Ribulose bisphosphate carboxylase (461 aa).

Asn112 contributes to the substrate binding site. The active-site Proton acceptor is Lys167. Lys169 contributes to the substrate binding site. Mg(2+) contacts are provided by Lys192, Asp194, and Glu195. At Lys192 the chain carries N6-carboxylysine. The active-site Proton acceptor is the His288. Substrate-binding residues include Arg289, His322, and Ser369.

Belongs to the RuBisCO large chain family. Type II subfamily. Homodimer. Requires Mg(2+) as cofactor.

The enzyme catalyses 2 (2R)-3-phosphoglycerate + 2 H(+) = D-ribulose 1,5-bisphosphate + CO2 + H2O. It catalyses the reaction D-ribulose 1,5-bisphosphate + O2 = 2-phosphoglycolate + (2R)-3-phosphoglycerate + 2 H(+). Functionally, ruBisCO catalyzes two reactions: the carboxylation of D-ribulose 1,5-bisphosphate, the primary event in carbon dioxide fixation, as well as the oxidative fragmentation of the pentose substrate. Both reactions occur simultaneously and in competition at the same active site. This is Ribulose bisphosphate carboxylase from Rhodopseudomonas palustris (strain ATCC BAA-98 / CGA009).